A 187-amino-acid chain; its full sequence is Troponin I, slow skeletal muscle (187 aa).

Pro-2 carries the post-translational modification N-acetylproline. Positions 2 to 48 (PEVERKPKITASRKLLLKSLMLAKAKECWEQEHEEREAEKVRYLAER) are involved in binding TNC. Phosphoserine is present on Ser-58. Residues 97–118 (LKLKVMDLRGKFKRPPLRRVRV) are involved in binding TNC and actin.

This sequence belongs to the troponin I family. In terms of assembly, binds to actin and tropomyosin. In terms of tissue distribution, highest levels observed in human skeletal muscle (e.g. gastrocnemious muscle), differentiated cultures of primary human muscle cells and rhabdomyosarcoma cells cultured in low serum medium. Expressed in C2 muscle cell myoblasts and myotubes.

Troponin I is the inhibitory subunit of troponin, the thin filament regulatory complex which confers calcium-sensitivity to striated muscle actomyosin ATPase activity. The protein is Troponin I, slow skeletal muscle (TNNI1) of Homo sapiens (Human).